The following is a 430-amino-acid chain: Elongation factor Tu (430 aa).

A tr-type G domain is found at 13-220 (RPHLNIGTIG…ACDKYIALPE (208 aa)). The G1 stretch occupies residues 22 to 29 (GHVDHGKT). GTP is bound at residue 22–29 (GHVDHGKT). Threonine 29 is a binding site for Mg(2+). The interval 66–70 (GITIS) is G2. Residues 87–90 (DCPG) form a G3 region. GTP-binding positions include 87–91 (DCPGH) and 142–145 (NKCD). The segment at 142–145 (NKCD) is G4. A G5 region spans residues 188–190 (SAL).

This sequence belongs to the TRAFAC class translation factor GTPase superfamily. Classic translation factor GTPase family. EF-Tu/EF-1A subfamily. Monomer.

It is found in the cytoplasm. The catalysed reaction is GTP + H2O = GDP + phosphate + H(+). Its function is as follows. GTP hydrolase that promotes the GTP-dependent binding of aminoacyl-tRNA to the A-site of ribosomes during protein biosynthesis. The protein is Elongation factor Tu of Neorickettsia sennetsu (strain ATCC VR-367 / Miyayama) (Ehrlichia sennetsu).